Reading from the N-terminus, the 339-residue chain is Lymphocyte-specific protein 1 (339 aa).

The segment at 1-198 (MAEASSDPGA…SPPLSPTTKL (198 aa)) is disordered. The residue at position 24 (S24) is a Phosphoserine. Composition is skewed to basic and acidic residues over residues 32 to 43 (VHEQCQHERDRQ) and 51 to 61 (GGGHVPERPKQ). Residue S111 is modified to Phosphoserine. The span at 117–140 (EDRPGLHAYEKEDSDEVHLEELSL) shows a compositional bias: basic and acidic residues. Phosphothreonine is present on T175. 4 positions are modified to phosphoserine: S177, S188, S189, and S193. Polar residues predominate over residues 185–196 (IEQSSPPLSPTT). At S252 the chain carries Phosphoserine; by MAPKAPK2. The disordered stretch occupies residues 294–315 (KSLWEQKGGSKTSSTIKSTPSG). Low complexity predominate over residues 300-315 (KGGSKTSSTIKSTPSG). K327 bears the N6-acetyllysine mark.

Binds actin. In terms of processing, phosphorylated by casein kinase II, protein kinase C and MAPKAPK2. Phosphorylation by PKC induces translocation from membrane to cytoplasm. Phosphorylation by MAPKAPK2 may regulate neutrophil chemotaxis. In terms of tissue distribution, activated T-lymphocytes.

Its subcellular location is the cell membrane. Functionally, may play a role in mediating neutrophil activation and chemotaxis. In Homo sapiens (Human), this protein is Lymphocyte-specific protein 1 (LSP1).